Reading from the N-terminus, the 177-residue chain is Endoribonuclease YbeY (177 aa).

The Zn(2+) site is built by H118, H122, and H128.

The protein belongs to the endoribonuclease YbeY family. The cofactor is Zn(2+).

The protein localises to the cytoplasm. Single strand-specific metallo-endoribonuclease involved in late-stage 70S ribosome quality control and in maturation of the 3' terminus of the 16S rRNA. The chain is Endoribonuclease YbeY from Mycobacterium bovis (strain ATCC BAA-935 / AF2122/97).